The sequence spans 75 residues: DNA-directed RNA polymerase subunit epsilon (75 aa).

This sequence belongs to the RNA polymerase subunit epsilon family. RNAP is composed of a core of 2 alpha, a beta and a beta' subunit. The core is associated with a delta subunit, and at least one of epsilon or omega. When a sigma factor is associated with the core the holoenzyme is formed, which can initiate transcription.

The catalysed reaction is RNA(n) + a ribonucleoside 5'-triphosphate = RNA(n+1) + diphosphate. Its function is as follows. A non-essential component of RNA polymerase (RNAP). This chain is DNA-directed RNA polymerase subunit epsilon, found in Lactobacillus gasseri (strain ATCC 33323 / DSM 20243 / BCRC 14619 / CIP 102991 / JCM 1131 / KCTC 3163 / NCIMB 11718 / NCTC 13722 / AM63).